The following is a 313-amino-acid chain: Urease accessory protein UreD (313 aa).

The segment at 1–30 is disordered; it reads MTDLSFPGQAASPGEGAGQTPSGGSGHRFD. The segment covering 15–26 has biased composition (gly residues); the sequence is EGAGQTPSGGSG.

It belongs to the UreD family. UreD, UreF and UreG form a complex that acts as a GTP-hydrolysis-dependent molecular chaperone, activating the urease apoprotein by helping to assemble the nickel containing metallocenter of UreC. The UreE protein probably delivers the nickel.

It is found in the cytoplasm. Functionally, required for maturation of urease via the functional incorporation of the urease nickel metallocenter. This chain is Urease accessory protein UreD, found in Chromohalobacter salexigens (strain ATCC BAA-138 / DSM 3043 / CIP 106854 / NCIMB 13768 / 1H11).